The sequence spans 519 residues: Acetylcholine receptor subunit gamma (519 aa).

Positions 1-22 (MCGGQRPLFLLPLLAVCLGAKG) are cleaved as a signal peptide. Topologically, residues 23–240 (RNQEERLLGD…VVFYLLIQRK (218 aa)) are extracellular. N-linked (GlcNAc...) asparagine glycans are attached at residues Asn52 and Asn163. The cysteines at positions 150 and 164 are disulfide-linked. The next 3 membrane-spanning stretches (helical) occupy residues 241–265 (PLFY…IYFL), 274–292 (CTVA…FLVA), and 308–329 (YLTF…VLNV). Residues 330–476 (SLRSPHTHSM…WFLVGRVLDR (147 aa)) lie on the Cytoplasmic side of the membrane. A helical transmembrane segment spans residues 477–497 (VCFLAMLSLFVCGTAGIFLMA).

Belongs to the ligand-gated ion channel (TC 1.A.9) family. Acetylcholine receptor (TC 1.A.9.1) subfamily. Gamma/CHRNG sub-subfamily. As to quaternary structure, pentamer of two alpha chains, and one each of the beta, delta, and gamma (in immature muscle) or epsilon (in mature muscle) chains.

It is found in the postsynaptic cell membrane. The protein resides in the cell membrane. The catalysed reaction is K(+)(in) = K(+)(out). It carries out the reaction Na(+)(in) = Na(+)(out). Functionally, after binding acetylcholine, the AChR responds by an extensive change in conformation that affects all subunits and leads to opening of an ion-conducting channel across the plasma membrane. This is Acetylcholine receptor subunit gamma (CHRNG) from Bos taurus (Bovine).